A 469-amino-acid polypeptide reads, in one-letter code: RNA-editing ligase 1, mitochondrial (469 aa).

A mitochondrion-targeting transit peptide spans 1 to 44; sequence MQLQRLGAPLLKRLVGGCIRQSTAPIMPCVVVSGSGVFLTPVRT. ATP is bound by residues 59–61, 86–92, arginine 111, glutamate 159, phenylalanine 209, and 307–309; these read IEI, EKVHGTN, and KLR. Lysine 87 (N6-AMP-lysine intermediate) is an active-site residue. The disordered stretch occupies residues 450-469; that stretch reads AAAQSEAIPPLSPAAPTKGE.

Belongs to the RNA ligase 2 family. As to quaternary structure, component of the RNA editing complex (editosome), a 1600 kDa complex composed of at least 20 proteins. Interacts with terminal uridylyltransferase MEAT1.

It localises to the mitochondrion. The catalysed reaction is ATP + (ribonucleotide)n-3'-hydroxyl + 5'-phospho-(ribonucleotide)m = (ribonucleotide)n+m + AMP + diphosphate.. In terms of biological role, essential for RNA editing. RNA editing in kinetoplastid mitochondria inserts and deletes uridylates at multiple sites in pre-mRNAs as directed by guide RNAs. This is RNA-editing ligase 1, mitochondrial (REL1) from Trypanosoma brucei brucei.